A 918-amino-acid polypeptide reads, in one-letter code: UPF0182 protein CPR_0011 (918 aa).

Helical transmembrane passes span 8 to 28 (TVLISILLLVVVFFVSTNFII), 46 to 66 (LIAICKLFVPIFILYFCVIAI), 91 to 111 (FLLSNLVISILGAGATATTQW), 151 to 171 (AISLIIILVLITVIIYLALGF), 200 to 220 (LAVLASVLSLLIGCSYLLKSY), 243 to 263 (IFYKVIAIACVISSIVVFISI), and 271 to 291 (IIISIASIAVLIVLEPVVAIF).

The protein belongs to the UPF0182 family.

The protein localises to the cell membrane. The chain is UPF0182 protein CPR_0011 from Clostridium perfringens (strain SM101 / Type A).